The following is a 73-amino-acid chain: uncharacterized protein (73 aa).

This is an uncharacterized protein from Homo sapiens (Human).